Consider the following 202-residue polypeptide: MIVKICGLKKAVDVAAAVENGADMIGFVFAKSKRQVTVDEAHELAKNIPAGVKKVGVFVNPTEEELTAAIKGVPLDIVQLHGQEPAEQANRTDAEVIKAFPVKDGKLPDNINDYPNAYILLDAPAEEYEGGSGKTFDWDKIDRDLLTKNKLIIAGGLNAQNVQEAIKRFEPYAVDISSGVETNGEKDPQKIKCFIKTAKGVE.

The protein belongs to the TrpF family.

The catalysed reaction is N-(5-phospho-beta-D-ribosyl)anthranilate = 1-(2-carboxyphenylamino)-1-deoxy-D-ribulose 5-phosphate. It participates in amino-acid biosynthesis; L-tryptophan biosynthesis; L-tryptophan from chorismate: step 3/5. This Listeria monocytogenes serovar 1/2a (strain ATCC BAA-679 / EGD-e) protein is N-(5'-phosphoribosyl)anthranilate isomerase.